We begin with the raw amino-acid sequence, 138 residues long: Small ribosomal subunit protein uS11c (138 aa).

It belongs to the universal ribosomal protein uS11 family. As to quaternary structure, part of the 30S ribosomal subunit.

It is found in the plastid. It localises to the chloroplast. In Phaseolus vulgaris (Kidney bean), this protein is Small ribosomal subunit protein uS11c.